Consider the following 423-residue polypeptide: Phaseolin (423 aa).

The signal sequence occupies residues 1–21 (RRVPLLLLGILFLASLSASFA). Asn28 is a glycosylation site (N-linked (GlcNAc...) asparagine). Cupin type-1 domains lie at 35-193 (FYFS…EKIN) and 228-383 (KSLD…EDVQ). N-linked (GlcNAc...) asparagine glycosylation is found at Asn243, Asn332, Asn390, and Asn396. The disordered stretch occupies residues 397–423 (GSYHKNAHPHEQEQQKQQKGRKGAFVY). Basic residues predominate over residues 414 to 423 (QKGRKGAFVY).

This sequence belongs to the 7S seed storage protein family. As to quaternary structure, homotrimer.

The protein localises to the vacuole. Its subcellular location is the aleurone grain. Functionally, major seed storage protein. The polypeptide is Phaseolin (PHS) (Phaseolus lunatus (Lima bean)).